The chain runs to 208 residues: Outer-membrane lipoprotein carrier protein (208 aa).

The signal sequence occupies residues 1-21 (MRLIRTLFVAALAMGTSLAHA).

The protein belongs to the LolA family. As to quaternary structure, monomer.

It localises to the periplasm. Participates in the translocation of lipoproteins from the inner membrane to the outer membrane. Only forms a complex with a lipoprotein if the residue after the N-terminal Cys is not an aspartate (The Asp acts as a targeting signal to indicate that the lipoprotein should stay in the inner membrane). The polypeptide is Outer-membrane lipoprotein carrier protein (Pseudomonas paraeruginosa (strain DSM 24068 / PA7) (Pseudomonas aeruginosa (strain PA7))).